A 312-amino-acid chain; its full sequence is Methionyl-tRNA formyltransferase (312 aa).

A (6S)-5,6,7,8-tetrahydrofolate-binding site is contributed by 107–110 (SLLP).

Belongs to the Fmt family.

It carries out the reaction L-methionyl-tRNA(fMet) + (6R)-10-formyltetrahydrofolate = N-formyl-L-methionyl-tRNA(fMet) + (6S)-5,6,7,8-tetrahydrofolate + H(+). Its function is as follows. Attaches a formyl group to the free amino group of methionyl-tRNA(fMet). The formyl group appears to play a dual role in the initiator identity of N-formylmethionyl-tRNA by promoting its recognition by IF2 and preventing the misappropriation of this tRNA by the elongation apparatus. The sequence is that of Methionyl-tRNA formyltransferase from Endomicrobium trichonymphae.